The chain runs to 415 residues: Fructose-like permease IIC component 1 (415 aa).

Residues Met1–Met46 lie on the Cytoplasmic side of the membrane. In terms of domain architecture, PTS EIIC type-2 spans Leu35–Leu410. Residues Val47–Trp67 form a helical membrane-spanning segment. At Leu68–Ser101 the chain is on the periplasmic side. Residues Phe102–Ile122 traverse the membrane as a helical segment. At Gly123 to Leu126 the chain is on the cytoplasmic side. A helical transmembrane segment spans residues Ala127–Phe147. Over Asp148–Ser157 the chain is Periplasmic. The helical transmembrane segment at Ser158–Val178 threads the bilayer. Residues Lys179–Thr197 lie on the Cytoplasmic side of the membrane. A helical membrane pass occupies residues Phe198–Pro218. At Phe219 to Lys237 the chain is on the periplasmic side. A helical transmembrane segment spans residues Gly238–Ile258. Topologically, residues Asn259 to Pro276 are cytoplasmic. Residues Val277–Ile297 form a helical membrane-spanning segment. Over Asp298–Ala318 the chain is Periplasmic. Residues Met319–Ile339 traverse the membrane as a helical segment. The Cytoplasmic segment spans residues Thr340 to Ala341. The chain crosses the membrane as a helical span at residues Ile342–Val362. The Periplasmic segment spans residues Gln363–Asn378. A helical membrane pass occupies residues Leu379–Phe399. At Leu400–Leu415 the chain is on the cytoplasmic side.

It localises to the cell inner membrane. The phosphoenolpyruvate-dependent sugar phosphotransferase system (PTS), a major carbohydrate active -transport system, catalyzes the phosphorylation of incoming sugar substrates concomitant with their translocation across the cell membrane. This Escherichia coli (strain K12) protein is Fructose-like permease IIC component 1 (fryC).